Consider the following 702-residue polypeptide: Choline transporter-like protein 5-A (702 aa).

The chain crosses the membrane as a helical span at residues 21-41; that stretch reads VLCCVLFVIVILGYIALGTVA. Residues 42–225 lie on the Extracellular side of the membrane; that stretch reads WIHGDPRKVI…KIVEDYASCW (184 aa). Asparagine 120, asparagine 173, and asparagine 180 each carry an N-linked (GlcNAc...) asparagine glycan. The helical transmembrane segment at 226–246 threads the bilayer; sequence YWIVIGLFIALVISLIFILLL. Topologically, residues 247-249 are cytoplasmic; it reads RFT. A helical transmembrane segment spans residues 250–270; it reads AGFLLWFIIFAVILLVAYGIW. Residues 271-308 lie on the Extracellular side of the membrane; the sequence is HCYWEFAVLRETPGADVTISDIGFQTDLHVYLQLSQTW. The helical transmembrane segment at 309-329 threads the bilayer; sequence LVFMVTLGLTEASIVLMLIFL. Residues 330-334 lie on the Cytoplasmic side of the membrane; the sequence is RKRVR. A helical transmembrane segment spans residues 335 to 355; it reads IAIALLREGSRAISYIMSALF. Topologically, residues 356-357 are extracellular; that stretch reads YP. A helical membrane pass occupies residues 358–378; that stretch reads IITFVLLAICISYWAMTALFL. Residues 379 to 443 are Cytoplasmic-facing; it reads ASSGDAVYKV…RYIFILQLCN (65 aa). A helical membrane pass occupies residues 444-464; sequence LLVFLWLVNFTIALGQCTVAG. The Extracellular portion of the chain corresponds to 465-498; it reads AFASYYWARRKPADIPPCPVFSSFSRALRYHTGS. The helical transmembrane segment at 499 to 519 threads the bilayer; that stretch reads LAFGSLILAVVQLIRVILEYL. At 520 to 593 the chain is on the cytoplasmic side; sequence DHKLKGAHNA…RVAVLDKVTD (74 aa). A helical membrane pass occupies residues 594 to 614; that stretch reads FLLFLGKLLIAGSVGVIAFFL. At 615–632 the chain is on the extracellular side; the sequence is FTRKIPIIQEEVPVLNYY. A helical transmembrane segment spans residues 633 to 653; it reads CVPLLTVILGSYLIAHSFFSV. Over 654 to 699 the chain is Cytoplasmic; that stretch reads YAMCVDTLFLCFCEDLERNDGTTAKPFFMSPGLKRILGKAEQSPKK.

The protein belongs to the CTL (choline transporter-like) family.

It is found in the cell membrane. The catalysed reaction is choline(out) + n H(+)(in) = choline(in) + n H(+)(out). Its function is as follows. Choline/H+ antiporter. The polypeptide is Choline transporter-like protein 5-A (slc44a5a) (Danio rerio (Zebrafish)).